We begin with the raw amino-acid sequence, 161 residues long: Phosphopantetheine adenylyltransferase (161 aa).

A substrate-binding site is contributed by Thr10. Residues 10 to 11 and His18 contribute to the ATP site; that span reads TF. Positions 42, 74, and 88 each coordinate substrate. ATP is bound by residues 89–91, Glu99, and 124–130; these read GLR and NAFISSS.

It belongs to the bacterial CoaD family. Homohexamer. The cofactor is Mg(2+).

The protein resides in the cytoplasm. It catalyses the reaction (R)-4'-phosphopantetheine + ATP + H(+) = 3'-dephospho-CoA + diphosphate. It participates in cofactor biosynthesis; coenzyme A biosynthesis; CoA from (R)-pantothenate: step 4/5. Reversibly transfers an adenylyl group from ATP to 4'-phosphopantetheine, yielding dephospho-CoA (dPCoA) and pyrophosphate. This chain is Phosphopantetheine adenylyltransferase, found in Wolinella succinogenes (strain ATCC 29543 / DSM 1740 / CCUG 13145 / JCM 31913 / LMG 7466 / NCTC 11488 / FDC 602W) (Vibrio succinogenes).